The following is a 432-amino-acid chain: D-amino acid dehydrogenase (432 aa).

An FAD-binding site is contributed by V3–W17.

The protein belongs to the DadA oxidoreductase family. The cofactor is FAD.

It carries out the reaction a D-alpha-amino acid + A + H2O = a 2-oxocarboxylate + AH2 + NH4(+). It functions in the pathway amino-acid degradation; D-alanine degradation; NH(3) and pyruvate from D-alanine: step 1/1. Its function is as follows. Oxidative deamination of D-amino acids. The sequence is that of D-amino acid dehydrogenase from Enterobacter sp. (strain 638).